Here is a 353-residue protein sequence, read N- to C-terminus: Photosystem II D2 protein (353 aa).

T2 carries the N-acetylthreonine modification. Position 2 is a phosphothreonine (T2). A helical transmembrane segment spans residues 41 to 61; the sequence is CAYFALGGWFTGTTFVTSWYT. H118 contacts chlorophyll a. A helical transmembrane segment spans residues 125–141; it reads GFMLRQFELARSVQLRP. Residues Q130 and N143 each contribute to the pheophytin a site. Residues 153–166 traverse the membrane as a helical segment; that stretch reads VFVSVFLIYPLGQS. Residue H198 coordinates chlorophyll a. A helical membrane pass occupies residues 208–228; that stretch reads AALLCAIHGATVENTLFEDGD. A plastoquinone-binding residues include H215 and F262. Position 215 (H215) interacts with Fe cation. Fe cation is bound at residue H269. A helical transmembrane segment spans residues 279-295; the sequence is GLWMSAIGVVGLALNLR.

This sequence belongs to the reaction center PufL/M/PsbA/D family. As to quaternary structure, PSII is composed of 1 copy each of membrane proteins PsbA, PsbB, PsbC, PsbD, PsbE, PsbF, PsbH, PsbI, PsbJ, PsbK, PsbL, PsbM, PsbT, PsbX, PsbY, PsbZ, Psb30/Ycf12, at least 3 peripheral proteins of the oxygen-evolving complex and a large number of cofactors. It forms dimeric complexes. The D1/D2 heterodimer binds P680, chlorophylls that are the primary electron donor of PSII, and subsequent electron acceptors. It shares a non-heme iron and each subunit binds pheophytin, quinone, additional chlorophylls, carotenoids and lipids. There is also a Cl(-1) ion associated with D1 and D2, which is required for oxygen evolution. The PSII complex binds additional chlorophylls, carotenoids and specific lipids. is required as a cofactor.

It is found in the plastid. The protein resides in the chloroplast thylakoid membrane. It catalyses the reaction 2 a plastoquinone + 4 hnu + 2 H2O = 2 a plastoquinol + O2. Its function is as follows. Photosystem II (PSII) is a light-driven water:plastoquinone oxidoreductase that uses light energy to abstract electrons from H(2)O, generating O(2) and a proton gradient subsequently used for ATP formation. It consists of a core antenna complex that captures photons, and an electron transfer chain that converts photonic excitation into a charge separation. The D1/D2 (PsbA/PsbD) reaction center heterodimer binds P680, the primary electron donor of PSII as well as several subsequent electron acceptors. D2 is needed for assembly of a stable PSII complex. This Welwitschia mirabilis (Tree tumbo) protein is Photosystem II D2 protein.